We begin with the raw amino-acid sequence, 243 residues long: Complement C1q tumor necrosis factor-related protein 5 (243 aa).

The first 15 residues, 1–15 (MRPLLALLLLGLASG), serve as a signal peptide directing secretion. A disordered region spans residues 15 to 124 (GSPPLDDNKI…VPPPADTPLP (110 aa)). The Collagen-like domain maps to 30–95 (GQPGLPGTPG…AGPVGAIGPA (66 aa)). The C1q domain maps to 99 to 238 (SVPPRSAFSA…GFLVYSDWHS (140 aa)).

Homotrimer (via collagen-like domain). May form higher order oligomers by supercoiling of the trimers. May interact with ERFE.

It localises to the secreted. This Rattus norvegicus (Rat) protein is Complement C1q tumor necrosis factor-related protein 5 (C1qtnf5).